The primary structure comprises 130 residues: Small ribosomal subunit protein uS9 (130 aa).

Positions 106 to 130 (RDSRKVERKKPGLKKARKASQFSKR) are disordered. The segment covering 111-130 (VERKKPGLKKARKASQFSKR) has biased composition (basic residues).

Belongs to the universal ribosomal protein uS9 family.

The chain is Small ribosomal subunit protein uS9 from Streptococcus pneumoniae serotype 2 (strain D39 / NCTC 7466).